Reading from the N-terminus, the 156-residue chain is Small ribosomal subunit protein uS7 (156 aa).

Belongs to the universal ribosomal protein uS7 family. As to quaternary structure, part of the 30S ribosomal subunit. Contacts proteins S9 and S11.

Functionally, one of the primary rRNA binding proteins, it binds directly to 16S rRNA where it nucleates assembly of the head domain of the 30S subunit. Is located at the subunit interface close to the decoding center, probably blocks exit of the E-site tRNA. This Tolumonas auensis (strain DSM 9187 / NBRC 110442 / TA 4) protein is Small ribosomal subunit protein uS7.